The primary structure comprises 98 residues: Ferredoxin-3 (98 aa).

4Fe-4S ferredoxin-type domains lie at 18–47 (FVEA…LQAL) and 66–95 (VMSI…HSPL). C27, C30, C33, C37, C75, C78, C81, and C85 together coordinate [4Fe-4S] cluster.

In terms of assembly, homodimer. The cofactor is [4Fe-4S] cluster.

Its function is as follows. Ferredoxins are iron-sulfur proteins that transfer electrons in a wide variety of metabolic reactions. This is Ferredoxin-3 (fdxB) from Trichormus variabilis (strain ATCC 29413 / PCC 7937) (Anabaena variabilis).